Reading from the N-terminus, the 342-residue chain is N-acetyl-gamma-glutamyl-phosphate reductase (342 aa).

Residue C146 is part of the active site.

It belongs to the NAGSA dehydrogenase family. Type 1 subfamily.

Its subcellular location is the cytoplasm. It catalyses the reaction N-acetyl-L-glutamate 5-semialdehyde + phosphate + NADP(+) = N-acetyl-L-glutamyl 5-phosphate + NADPH + H(+). It functions in the pathway amino-acid biosynthesis; L-arginine biosynthesis; N(2)-acetyl-L-ornithine from L-glutamate: step 3/4. Its function is as follows. Catalyzes the NADPH-dependent reduction of N-acetyl-5-glutamyl phosphate to yield N-acetyl-L-glutamate 5-semialdehyde. This Thermobifida fusca (strain YX) protein is N-acetyl-gamma-glutamyl-phosphate reductase.